The primary structure comprises 427 residues: Glutamate-1-semialdehyde 2,1-aminomutase 1 (427 aa).

K267 is subject to N6-(pyridoxal phosphate)lysine.

It belongs to the class-III pyridoxal-phosphate-dependent aminotransferase family. HemL subfamily. In terms of assembly, homodimer. Pyridoxal 5'-phosphate serves as cofactor.

The protein localises to the cytoplasm. The enzyme catalyses (S)-4-amino-5-oxopentanoate = 5-aminolevulinate. The protein operates within porphyrin-containing compound metabolism; protoporphyrin-IX biosynthesis; 5-aminolevulinate from L-glutamyl-tRNA(Glu): step 2/2. In Macrococcus caseolyticus (strain JCSC5402) (Macrococcoides caseolyticum), this protein is Glutamate-1-semialdehyde 2,1-aminomutase 1.